Consider the following 142-residue polypeptide: Large ribosomal subunit protein uL13 (142 aa).

This sequence belongs to the universal ribosomal protein uL13 family. In terms of assembly, part of the 50S ribosomal subunit.

Its function is as follows. This protein is one of the early assembly proteins of the 50S ribosomal subunit, although it is not seen to bind rRNA by itself. It is important during the early stages of 50S assembly. In Acinetobacter baumannii (strain AB0057), this protein is Large ribosomal subunit protein uL13.